A 74-amino-acid polypeptide reads, in one-letter code: DNA-directed RNA polymerase subunit omega (74 aa).

Belongs to the RNA polymerase subunit omega family. As to quaternary structure, the RNAP catalytic core consists of 2 alpha, 1 beta, 1 beta' and 1 omega subunit. When a sigma factor is associated with the core the holoenzyme is formed, which can initiate transcription.

The catalysed reaction is RNA(n) + a ribonucleoside 5'-triphosphate = RNA(n+1) + diphosphate. Its function is as follows. Promotes RNA polymerase assembly. Latches the N- and C-terminal regions of the beta' subunit thereby facilitating its interaction with the beta and alpha subunits. The chain is DNA-directed RNA polymerase subunit omega from Campylobacter jejuni subsp. jejuni serotype O:6 (strain 81116 / NCTC 11828).